The chain runs to 163 residues: Large ribosomal subunit protein uL15 (163 aa).

Basic residues predominate over residues 1-29 (MSKKRRQRGSRTHGGGSHKNRRGAGHRGG). 2 disordered regions span residues 1 to 59 (MSKK…KTRR) and 135 to 163 (VADG…DEES). Composition is skewed to basic and acidic residues over residues 33 to 46 (AGRD…HEPL) and 142 to 154 (LSER…AEKD).

This sequence belongs to the universal ribosomal protein uL15 family. In terms of assembly, part of the 50S ribosomal subunit.

Functionally, binds to the 23S rRNA. This chain is Large ribosomal subunit protein uL15, found in Natronomonas pharaonis (strain ATCC 35678 / DSM 2160 / CIP 103997 / JCM 8858 / NBRC 14720 / NCIMB 2260 / Gabara) (Halobacterium pharaonis).